The chain runs to 349 residues: Nitrilase, bromoxynil-specific (349 aa).

A CN hydrolase domain is found at 5–274 (FKAAAVQAEP…EGIVYAEIDL (270 aa)). Residue glutamate 45 is the Proton acceptor of the active site. Lysine 127 serves as the catalytic Proton donor. Cysteine 161 functions as the Nucleophile in the catalytic mechanism.

The protein belongs to the carbon-nitrogen hydrolase superfamily. Nitrilase family. As to quaternary structure, homodimer.

It catalyses the reaction a nitrile + 2 H2O = a carboxylate + NH4(+). Functionally, specific for the herbicide bromoxynil (3,5-dibromo-4-hydroxybenzonitrile); converts it to its metabolite 3,5-dibromo-4-hydroxybenzoic acid. In Klebsiella pneumoniae subsp. ozaenae, this protein is Nitrilase, bromoxynil-specific (bxn).